A 681-amino-acid polypeptide reads, in one-letter code: DNA ligase (681 aa).

NAD(+) is bound by residues 34 to 38 (DAEYD), 83 to 84 (SL), and glutamate 115. The N6-AMP-lysine intermediate role is filled by lysine 117. NAD(+) contacts are provided by arginine 138, glutamate 185, lysine 301, and lysine 325. The Zn(2+) site is built by cysteine 419, cysteine 422, cysteine 437, and cysteine 443. One can recognise a BRCT domain in the interval 602-681 (RKSDVLAGQT…AALLALIGER (80 aa)).

This sequence belongs to the NAD-dependent DNA ligase family. LigA subfamily. Requires Mg(2+) as cofactor. It depends on Mn(2+) as a cofactor.

The catalysed reaction is NAD(+) + (deoxyribonucleotide)n-3'-hydroxyl + 5'-phospho-(deoxyribonucleotide)m = (deoxyribonucleotide)n+m + AMP + beta-nicotinamide D-nucleotide.. Functionally, DNA ligase that catalyzes the formation of phosphodiester linkages between 5'-phosphoryl and 3'-hydroxyl groups in double-stranded DNA using NAD as a coenzyme and as the energy source for the reaction. It is essential for DNA replication and repair of damaged DNA. In Chloroflexus aggregans (strain MD-66 / DSM 9485), this protein is DNA ligase.